Here is a 390-residue protein sequence, read N- to C-terminus: Pyruvate dehydrogenase E1 component subunit alpha-1, mitochondrial (390 aa).

The transit peptide at methionine 1–alanine 15 directs the protein to the mitochondrion. Positions 91, 117, 118, 166, 168, 197, 198, 199, 226, and 228 each coordinate pyruvate. Residues tyrosine 117, arginine 118, glycine 166, valine 168, aspartate 197, glycine 198, alanine 199, and asparagine 226 each contribute to the thiamine diphosphate site. Aspartate 197 is a binding site for Mg(2+). Positions 226 and 228 each coordinate Mg(2+). Histidine 292 contacts thiamine diphosphate. Residues serine 293 to glutamine 312 are disordered. Residues arginine 302–glutamine 312 show a composition bias toward basic and acidic residues.

In terms of assembly, tetramer of 2 alpha and 2 beta subunits. Thiamine diphosphate is required as a cofactor. The cofactor is Mg(2+).

It is found in the mitochondrion matrix. It catalyses the reaction N(6)-[(R)-lipoyl]-L-lysyl-[protein] + pyruvate + H(+) = N(6)-[(R)-S(8)-acetyldihydrolipoyl]-L-lysyl-[protein] + CO2. The pyruvate dehydrogenase complex catalyzes the overall conversion of pyruvate to acetyl-CoA and CO(2). It contains multiple copies of three enzymatic components: pyruvate dehydrogenase (E1), dihydrolipoamide acetyltransferase (E2) and lipoamide dehydrogenase (E3). This Oryza sativa subsp. japonica (Rice) protein is Pyruvate dehydrogenase E1 component subunit alpha-1, mitochondrial.